The sequence spans 144 residues: Urease accessory protein UreE (144 aa).

The protein belongs to the UreE family.

It localises to the cytoplasm. Its function is as follows. Involved in urease metallocenter assembly. Binds nickel. Probably functions as a nickel donor during metallocenter assembly. This is Urease accessory protein UreE from Thermosynechococcus vestitus (strain NIES-2133 / IAM M-273 / BP-1).